The following is a 392-amino-acid chain: NADH-quinone oxidoreductase subunit D (392 aa).

This sequence belongs to the complex I 49 kDa subunit family. NDH-1 is composed of 14 different subunits. Subunits NuoB, C, D, E, F, and G constitute the peripheral sector of the complex.

The protein resides in the cell inner membrane. The enzyme catalyses a quinone + NADH + 5 H(+)(in) = a quinol + NAD(+) + 4 H(+)(out). Its function is as follows. NDH-1 shuttles electrons from NADH, via FMN and iron-sulfur (Fe-S) centers, to quinones in the respiratory chain. The immediate electron acceptor for the enzyme in this species is believed to be ubiquinone. Couples the redox reaction to proton translocation (for every two electrons transferred, four hydrogen ions are translocated across the cytoplasmic membrane), and thus conserves the redox energy in a proton gradient. The sequence is that of NADH-quinone oxidoreductase subunit D from Parvibaculum lavamentivorans (strain DS-1 / DSM 13023 / NCIMB 13966).